A 177-amino-acid chain; its full sequence is Translation initiation factor IF-3 (177 aa).

It belongs to the IF-3 family. In terms of assembly, monomer.

It is found in the cytoplasm. Its function is as follows. IF-3 binds to the 30S ribosomal subunit and shifts the equilibrium between 70S ribosomes and their 50S and 30S subunits in favor of the free subunits, thus enhancing the availability of 30S subunits on which protein synthesis initiation begins. This Nostoc sp. (strain PCC 7120 / SAG 25.82 / UTEX 2576) protein is Translation initiation factor IF-3.